A 557-amino-acid polypeptide reads, in one-letter code: Dihydroxy-acid dehydratase (557 aa).

Asp78 provides a ligand contact to Mg(2+). A [2Fe-2S] cluster-binding site is contributed by Cys119. Positions 120 and 121 each coordinate Mg(2+). An N6-carboxylysine modification is found at Lys121. Residue Cys192 participates in [2Fe-2S] cluster binding. Glu446 contacts Mg(2+). The Proton acceptor role is filled by Ser472.

The protein belongs to the IlvD/Edd family. Homodimer. [2Fe-2S] cluster is required as a cofactor. It depends on Mg(2+) as a cofactor.

It catalyses the reaction (2R)-2,3-dihydroxy-3-methylbutanoate = 3-methyl-2-oxobutanoate + H2O. The catalysed reaction is (2R,3R)-2,3-dihydroxy-3-methylpentanoate = (S)-3-methyl-2-oxopentanoate + H2O. The protein operates within amino-acid biosynthesis; L-isoleucine biosynthesis; L-isoleucine from 2-oxobutanoate: step 3/4. Its pathway is amino-acid biosynthesis; L-valine biosynthesis; L-valine from pyruvate: step 3/4. Functionally, functions in the biosynthesis of branched-chain amino acids. Catalyzes the dehydration of (2R,3R)-2,3-dihydroxy-3-methylpentanoate (2,3-dihydroxy-3-methylvalerate) into 2-oxo-3-methylpentanoate (2-oxo-3-methylvalerate) and of (2R)-2,3-dihydroxy-3-methylbutanoate (2,3-dihydroxyisovalerate) into 2-oxo-3-methylbutanoate (2-oxoisovalerate), the penultimate precursor to L-isoleucine and L-valine, respectively. This chain is Dihydroxy-acid dehydratase, found in Campylobacter fetus subsp. fetus (strain 82-40).